Here is an 852-residue protein sequence, read N- to C-terminus: Homeobox-leucine zipper protein ATHB-14 (852 aa).

A disordered region spans residues 1-25; it reads MMMVHSMSRDMMNRESPDKGLDSGK. Residues 7-22 show a composition bias toward basic and acidic residues; sequence MSRDMMNRESPDKGLD. Positions 22–85 form a DNA-binding region, homeobox; the sequence is DSGKYVRYTP…NRRCREKQRK (64 aa). The stretch at 80–122 forms a coiled coil; the sequence is REKQRKEAARLQTVNRKLNAMNKLLMEENDRLQKQVSNLVYEN. A ZIP domain region spans residues 80–130; sequence REKQRKEAARLQTVNRKLNAMNKLLMEENDRLQKQVSNLVYENGHMKHQLH. A compositionally biased stretch (polar residues) spans 130-148; it reads HTASGTTTDNSCESVVVSG. The disordered stretch occupies residues 130 to 166; it reads HTASGTTTDNSCESVVVSGQQHQQQNPNPQHQQRDAN. Positions 149-160 are enriched in low complexity; sequence QQHQQQNPNPQH. An START domain is found at 164–392; that stretch reads DANNPAGLLS…IAQETSGEVQ (229 aa).

It belongs to the HD-ZIP homeobox family. Class III subfamily. In terms of assembly, homodimer. Heterodimer with ZPR3. Interacts with ESR1 and ESR2. Interacts with ZPR3. As to expression, expressed in the center of the meristem and on the adaxial side of the leaves.

Its subcellular location is the nucleus. With respect to regulation, inhibited by ZPR3. Its function is as follows. Probable transcription factor involved in the determination of adaxial-abaxial polarity in ovule primordium. Specifies adaxial leaf fates. The polypeptide is Homeobox-leucine zipper protein ATHB-14 (ATHB-14) (Arabidopsis thaliana (Mouse-ear cress)).